The primary structure comprises 509 residues: Membrane-bound lytic murein transglycosylase F (509 aa).

An N-terminal signal peptide occupies residues 1-40 (MLASACTHSWRTGRFLNRIIKSSVQTLTAAALIANLSACS). Positions 41–280 (RPTTLEKIEQ…YLQERYFGHV (240 aa)) are non-LT domain. The tract at residues 281–509 (NQLNYVGART…APFRVTPPML (229 aa)) is LT domain. Glutamate 327 is a catalytic residue. The disordered stretch occupies residues 474-500 (DGSVAQNEDAPTTGADGTTEETPAIPA).

In the N-terminal section; belongs to the bacterial solute-binding protein 3 family. It in the C-terminal section; belongs to the transglycosylase Slt family.

It localises to the cell outer membrane. It catalyses the reaction Exolytic cleavage of the (1-&gt;4)-beta-glycosidic linkage between N-acetylmuramic acid (MurNAc) and N-acetylglucosamine (GlcNAc) residues in peptidoglycan, from either the reducing or the non-reducing ends of the peptidoglycan chains, with concomitant formation of a 1,6-anhydrobond in the MurNAc residue.. Murein-degrading enzyme that degrades murein glycan strands and insoluble, high-molecular weight murein sacculi, with the concomitant formation of a 1,6-anhydromuramoyl product. Lytic transglycosylases (LTs) play an integral role in the metabolism of the peptidoglycan (PG) sacculus. Their lytic action creates space within the PG sacculus to allow for its expansion as well as for the insertion of various structures such as secretion systems and flagella. In Hahella chejuensis (strain KCTC 2396), this protein is Membrane-bound lytic murein transglycosylase F.